Consider the following 133-residue polypeptide: Putative pre-16S rRNA nuclease (133 aa).

It belongs to the YqgF nuclease family.

The protein localises to the cytoplasm. Could be a nuclease involved in processing of the 5'-end of pre-16S rRNA. This is Putative pre-16S rRNA nuclease from Alcanivorax borkumensis (strain ATCC 700651 / DSM 11573 / NCIMB 13689 / SK2).